Consider the following 486-residue polypeptide: Protein ZINC INDUCED FACILITATOR 1 (486 aa).

Transmembrane regions (helical) follow at residues 41 to 61 (FVWI…PFLY), 82 to 102 (FVGC…GIVA), 109 to 129 (PIIL…GLSS), 131 to 151 (FWMA…LGTM), 170 to 190 (AVST…GFLA), 212 to 232 (ALPC…CCFI), 288 to 308 (IIVY…FALW), 327 to 347 (TVLA…YPLA), 362 to 384 (ALMI…SLSL), 391 to 408 (ILIN…LILQ), 423 to 443 (IAMT…GILF), and 461 to 481 (VFFV…KPFL).

This sequence belongs to the major facilitator superfamily. Strongly expressed in developing leaves, differentiating zones of root tips and sepals of developing flowers. Restricted to vascular tissues in older leaves, mature roots, flowers, anthers and filaments. Not expressed in developing anthers.

The protein resides in the vacuole membrane. In terms of biological role, major facilitator superfamily (MFS) transporter involved in zinc tolerance by participating in vacuolar sequestration of zinc. This chain is Protein ZINC INDUCED FACILITATOR 1 (ZIF1), found in Arabidopsis thaliana (Mouse-ear cress).